An 825-amino-acid polypeptide reads, in one-letter code: Exocyst complex component SEC10a (825 aa).

The stretch at 244–266 forms a coiled coil; it reads RGLEVAVANLQDYCNELENRLLS.

Belongs to the SEC10 family. The exocyst complex is composed of SEC3, SEC5, SEC6, SEC8, SEC10, EXO70A1 and EXO84B. Interacts with EXO84B. Binds to EXO70E2. Binds directly to B1L. As to expression, expressed in seedlings, roots, leaves and flowers.

The protein localises to the cytoplasm. Its subcellular location is the cytosol. It is found in the secreted. It localises to the extracellular exosome. Functionally, component of the exocyst complex involved in the docking of exocytic vesicles with fusion sites on the plasma membrane during regulated or polarized secretion. Involved in polarized cell growth and organ morphogenesis. During cytokinesis, involved in cell plate initiation, cell plate maturation and formation of new primary cell wall. This is Exocyst complex component SEC10a from Arabidopsis thaliana (Mouse-ear cress).